We begin with the raw amino-acid sequence, 292 residues long: Small ribosomal subunit protein uS9m (292 aa).

The tract at residues 273-292 is disordered; the sequence is VERKKPGKRKARKMPTWVKR.

It belongs to the universal ribosomal protein uS9 family.

It localises to the mitochondrion. The protein is Small ribosomal subunit protein uS9m (MRPS9) of Kluyveromyces marxianus (Yeast).